Reading from the N-terminus, the 336-residue chain is Holliday junction branch migration complex subunit RuvB (336 aa).

The tract at residues 1 to 182 (MKERIVNLET…FGMSFRMQFY (182 aa)) is large ATPase domain (RuvB-L). Residues L21, R22, G63, K66, T67, S68, 129–131 (EDF), R172, Y182, and R219 each bind ATP. T67 contributes to the Mg(2+) binding site. Residues 183–253 (SPSELALIIK…ITLHALNELG (71 aa)) form a small ATPAse domain (RuvB-S) region. The interval 256 to 336 (ELGFDEADLA…IPTLNPQTLF (81 aa)) is head domain (RuvB-H). DNA is bound by residues R310 and R315.

It belongs to the RuvB family. In terms of assembly, homohexamer. Forms an RuvA(8)-RuvB(12)-Holliday junction (HJ) complex. HJ DNA is sandwiched between 2 RuvA tetramers; dsDNA enters through RuvA and exits via RuvB. An RuvB hexamer assembles on each DNA strand where it exits the tetramer. Each RuvB hexamer is contacted by two RuvA subunits (via domain III) on 2 adjacent RuvB subunits; this complex drives branch migration. In the full resolvosome a probable DNA-RuvA(4)-RuvB(12)-RuvC(2) complex forms which resolves the HJ.

It localises to the cytoplasm. It catalyses the reaction ATP + H2O = ADP + phosphate + H(+). Functionally, the RuvA-RuvB-RuvC complex processes Holliday junction (HJ) DNA during genetic recombination and DNA repair, while the RuvA-RuvB complex plays an important role in the rescue of blocked DNA replication forks via replication fork reversal (RFR). RuvA specifically binds to HJ cruciform DNA, conferring on it an open structure. The RuvB hexamer acts as an ATP-dependent pump, pulling dsDNA into and through the RuvAB complex. RuvB forms 2 homohexamers on either side of HJ DNA bound by 1 or 2 RuvA tetramers; 4 subunits per hexamer contact DNA at a time. Coordinated motions by a converter formed by DNA-disengaged RuvB subunits stimulates ATP hydrolysis and nucleotide exchange. Immobilization of the converter enables RuvB to convert the ATP-contained energy into a lever motion, pulling 2 nucleotides of DNA out of the RuvA tetramer per ATP hydrolyzed, thus driving DNA branch migration. The RuvB motors rotate together with the DNA substrate, which together with the progressing nucleotide cycle form the mechanistic basis for DNA recombination by continuous HJ branch migration. Branch migration allows RuvC to scan DNA until it finds its consensus sequence, where it cleaves and resolves cruciform DNA. The chain is Holliday junction branch migration complex subunit RuvB from Helicobacter pylori (strain Shi470).